A 290-amino-acid polypeptide reads, in one-letter code: Arylamine N-acetyltransferase 1 (290 aa).

Methionine 1 is subject to N-acetylmethionine. Position 103 (serine 103) interacts with CoA. Residue 106–107 (IH) coordinates substrate. Tyrosine 208 contacts CoA.

This sequence belongs to the arylamine N-acetyltransferase family.

The protein resides in the cytoplasm. The catalysed reaction is an arylamine + acetyl-CoA = an N-acetylarylamine + CoA. Its function is as follows. Participates in the detoxification of a plethora of hydrazine and arylamine drugs. The protein is Arylamine N-acetyltransferase 1 (NAT1) of Bos taurus (Bovine).